The following is a 349-amino-acid chain: tRNA-specific 2-thiouridylase MnmA (349 aa).

Residues 6–13 (LLSGGVDS) and Met-32 each bind ATP. Cys-103 acts as the Nucleophile in catalysis. The cysteines at positions 103 and 195 are disulfide-linked. ATP is bound at residue Gly-127. The interaction with tRNA stretch occupies residues 145 to 147 (KDQ). Residue Cys-195 is the Cysteine persulfide intermediate of the active site.

It belongs to the MnmA/TRMU family.

It is found in the cytoplasm. The enzyme catalyses S-sulfanyl-L-cysteinyl-[protein] + uridine(34) in tRNA + AH2 + ATP = 2-thiouridine(34) in tRNA + L-cysteinyl-[protein] + A + AMP + diphosphate + H(+). In terms of biological role, catalyzes the 2-thiolation of uridine at the wobble position (U34) of tRNA, leading to the formation of s(2)U34. In Pseudothermotoga lettingae (strain ATCC BAA-301 / DSM 14385 / NBRC 107922 / TMO) (Thermotoga lettingae), this protein is tRNA-specific 2-thiouridylase MnmA.